The chain runs to 260 residues: Uridylate kinase (260 aa).

29–32 is a binding site for ATP; it reads KLSG. The tract at residues 37–42 is involved in allosteric activation by GTP; the sequence is GDLGYG. Glycine 71 serves as a coordination point for UMP. The ATP site is built by glycine 72 and arginine 76. Residues aspartate 91 and 152-159 contribute to the UMP site; that span reads SGNPFFTT. Residues threonine 179, tyrosine 185, and aspartate 188 each contribute to the ATP site.

Belongs to the UMP kinase family. In terms of assembly, homohexamer.

Its subcellular location is the cytoplasm. It carries out the reaction UMP + ATP = UDP + ADP. It participates in pyrimidine metabolism; CTP biosynthesis via de novo pathway; UDP from UMP (UMPK route): step 1/1. Allosterically activated by GTP. Inhibited by UTP. In terms of biological role, catalyzes the reversible phosphorylation of UMP to UDP. This is Uridylate kinase from Synechocystis sp. (strain ATCC 27184 / PCC 6803 / Kazusa).